The chain runs to 251 residues: 3-deoxy-manno-octulosonate cytidylyltransferase (251 aa).

This sequence belongs to the KdsB family.

The protein localises to the cytoplasm. The catalysed reaction is 3-deoxy-alpha-D-manno-oct-2-ulosonate + CTP = CMP-3-deoxy-beta-D-manno-octulosonate + diphosphate. Its pathway is nucleotide-sugar biosynthesis; CMP-3-deoxy-D-manno-octulosonate biosynthesis; CMP-3-deoxy-D-manno-octulosonate from 3-deoxy-D-manno-octulosonate and CTP: step 1/1. It functions in the pathway bacterial outer membrane biogenesis; lipopolysaccharide biosynthesis. Activates KDO (a required 8-carbon sugar) for incorporation into bacterial lipopolysaccharide in Gram-negative bacteria. This Chromobacterium violaceum (strain ATCC 12472 / DSM 30191 / JCM 1249 / CCUG 213 / NBRC 12614 / NCIMB 9131 / NCTC 9757 / MK) protein is 3-deoxy-manno-octulosonate cytidylyltransferase.